The chain runs to 221 residues: Lactate racemization regulatory protein (221 aa).

In terms of domain architecture, HTH crp-type spans asparagine 139–serine 213. Residues asparagine 172–lysine 192 constitute a DNA-binding region (H-T-H motif).

Multimerizes on DNA. Multimerization is required for transcription activation.

L-lactate acts as a positive effector on the binding and multimerization of LarR on DNA, while D-lactate antagonizes the positive effect of L-lactate. Positive transcriptional regulator that is absolutely required for the expression of lactate racemase (Lar) activity. Controls Lar expression by sensing the L-/D-lactate ration. Binds to a 16-bp palindromic sequence (Lar box motif) that is present in the larR-larA intergenic region, allowing transcription of the larABCDE operon. The protein is Lactate racemization regulatory protein of Lactiplantibacillus plantarum (strain ATCC BAA-793 / NCIMB 8826 / WCFS1) (Lactobacillus plantarum).